We begin with the raw amino-acid sequence, 347 residues long: UPF0283 membrane protein ECA1987 (347 aa).

Basic and acidic residues predominate over residues methionine 1 to phenylalanine 11. The interval methionine 1 to glutamate 48 is disordered. 3 helical membrane-spanning segments follow: residues methionine 70–leucine 90, tryptophan 99–leucine 119, and glutamate 213–tryptophan 233.

Belongs to the UPF0283 family.

Its subcellular location is the cell inner membrane. The protein is UPF0283 membrane protein ECA1987 of Pectobacterium atrosepticum (strain SCRI 1043 / ATCC BAA-672) (Erwinia carotovora subsp. atroseptica).